We begin with the raw amino-acid sequence, 209 residues long: Ribosomal RNA large subunit methyltransferase E (209 aa).

Residues Gly63, Trp65, Asp83, Asp99, and Asp124 each contribute to the S-adenosyl-L-methionine site. Residue Lys164 is the Proton acceptor of the active site.

It belongs to the class I-like SAM-binding methyltransferase superfamily. RNA methyltransferase RlmE family.

The protein resides in the cytoplasm. It catalyses the reaction uridine(2552) in 23S rRNA + S-adenosyl-L-methionine = 2'-O-methyluridine(2552) in 23S rRNA + S-adenosyl-L-homocysteine + H(+). Its function is as follows. Specifically methylates the uridine in position 2552 of 23S rRNA at the 2'-O position of the ribose in the fully assembled 50S ribosomal subunit. This is Ribosomal RNA large subunit methyltransferase E from Aeromonas salmonicida (strain A449).